We begin with the raw amino-acid sequence, 109 residues long: uncharacterized protein (109 aa).

One can recognise an HTH hxlR-type domain in the interval 10-109; the sequence is APFEYTLSLI…WGMAQGGPHM (100 aa).

This is an uncharacterized protein from Bacillus subtilis (strain 168).